Consider the following 330-residue polypeptide: Complement factor H-related protein 3 (330 aa).

The signal sequence occupies residues 1–18 (MLLLINVILTLWVSCANG). 5 Sushi domains span residues 22-84 (PCDF…VPCL), 85-142 (RKCY…RCIR), 144-205 (RTCS…ICIN), 208-266 (EKCG…RCIH), and 267-330 (PCII…PRCE). Cystine bridges form between Cys23–Cys72, Cys55–Cys83, Cys87–Cys129, Cys114–Cys140, Cys146–Cys192, and Cys175–Cys203. The N-linked (GlcNAc...) asparagine glycan is linked to Asn108. Residues Asn185 and Asn205 are each glycosylated (N-linked (GlcNAc...) asparagine). Disulfide bonds link Cys210–Cys253, Cys239–Cys264, Cys268–Cys319, and Cys302–Cys329. Asn309 carries an N-linked (GlcNAc...) asparagine glycan.

As to expression, expressed by the liver and secreted in plasma.

Its subcellular location is the secreted. Functionally, might be involved in complement regulation. In Homo sapiens (Human), this protein is Complement factor H-related protein 3 (CFHR3).